Here is a 669-residue protein sequence, read N- to C-terminus: Very long-chain fatty acid transport protein (669 aa).

Topologically, residues 1–5 (MSPIQ) are cytoplasmic. A helical transmembrane segment spans residues 6–26 (VVVFALSRIFLLLFRLIKLII). Residues 27 to 148 (TPIQKSLGYL…YVAIDCTNKP (122 aa)) are Extracellular-facing. The chain crosses the membrane as a helical span at residues 149–169 (LFVFLWLSLWNIGAIPAFLNY). The Cytoplasmic segment spans residues 170 to 270 (NTKGTPLVHS…TGLPKSAIMS (101 aa)). 256–267 (YTSGTTGLPKSA) is an ATP binding site. An intramembrane segment occupies 271-339 (WRKSSVGCQV…FWKQVYLTGA (69 aa)). The Cytoplasmic portion of the chain corresponds to 340-669 (THIQYVGEVC…EAIDAQTIKL (330 aa)). The FACS signature appears at 501–551 (DAWYRCGDLLKADEYGLWYFLDRMGDTFRWKSENVSTTEVEDQLTASNKEQ). The short motif at 667–669 (IKL) is the C-terminal peroxisome targeting signal (PTS1) element.

This sequence belongs to the ATP-dependent AMP-binding enzyme family. As to quaternary structure, interacts with fatty acyl-CoA synthetases FAA1 and FAA4.

Its subcellular location is the lipid droplet. It is found in the cell membrane. The protein resides in the peroxisome membrane. The protein localises to the peroxisome. The catalysed reaction is a very long-chain fatty acid + ATP + CoA = a very long-chain fatty acyl-CoA + AMP + diphosphate. It catalyses the reaction tetracosanoate + ATP + CoA = tetracosanoyl-CoA + AMP + diphosphate. In terms of biological role, acyl-CoA synthetase required for both the import of long chain fatty acids (LCFAs) (C14-C18) and the activation very long chain fatty acids (VLCFAs) (C20-C26) by esterification of the fatty acids into metabolically active CoA-thioesters for subsequent degradation or incorporation into phospholipids. The transport and fatty acyl-CoA synthetase activities are genetically separable and are thus independent activities. Esterifies VLCFAs in the peroxisome matrix. The VLCFAs are actively transported into peroxisomes by a PXA1-PXA2 heterodimeric transporter in the peroxisomal membrane. The polypeptide is Very long-chain fatty acid transport protein (FAT1) (Saccharomyces cerevisiae (strain ATCC 204508 / S288c) (Baker's yeast)).